We begin with the raw amino-acid sequence, 138 residues long: Putative pre-16S rRNA nuclease (138 aa).

Belongs to the YqgF nuclease family.

The protein resides in the cytoplasm. Functionally, could be a nuclease involved in processing of the 5'-end of pre-16S rRNA. This Karelsulcia muelleri (strain GWSS) (Sulcia muelleri) protein is Putative pre-16S rRNA nuclease.